The primary structure comprises 141 residues: Hemoglobin subunit alpha-2 (141 aa).

Positions 1 to 141 constitute a Globin domain; that stretch reads VLSPADKNNV…VSTVLTSKYR (141 aa). Histidine 58 provides a ligand contact to O2. Histidine 87 is a binding site for heme b.

This sequence belongs to the globin family. Heterotetramer of two alpha chains and two beta chains. In terms of tissue distribution, red blood cells.

Its function is as follows. Involved in oxygen transport from the lung to the various peripheral tissues. The protein is Hemoglobin subunit alpha-2 of Varecia variegata (Black-and-white ruffed lemur).